The chain runs to 52 residues: UPF0391 membrane protein ABAYE0050 (52 aa).

The next 2 helical transmembrane spans lie at 6–26 (IIFA…VAGL) and 30–50 (FAVI…ISRG).

The protein belongs to the UPF0391 family.

Its subcellular location is the cell membrane. This Acinetobacter baumannii (strain AYE) protein is UPF0391 membrane protein ABAYE0050.